Here is a 162-residue protein sequence, read N- to C-terminus: Caveolin-2 (162 aa).

The Cytoplasmic portion of the chain corresponds to 1-86; the sequence is MGLETEKTDV…FEISKYVMYK (86 aa). Tyr19 is modified (phosphotyrosine; by SRC). Residues Ser20 and Ser23 each carry the phosphoserine modification. A Phosphotyrosine; by SRC modification is found at Tyr27. A Phosphoserine modification is found at Ser36. Residues 87-107 constitute an intramembrane region (helical); that stretch reads FLTVFLAIPLAFLAGILFATL. The Cytoplasmic segment spans residues 108 to 162; it reads SCLHIWIIMPFVKTCLMVLPSVQTIWKSVTDAIVAPLCTSIGRSFSSVSLQLSQD.

It belongs to the caveolin family. Monomer or homodimer. Interacts with CAV1; the interaction forms a stable heterooligomeric complex that is required for targeting to lipid rafts and for caveolae formation. Tyrosine phosphorylated forms do not form heterooligomers with the Tyr-19-phosphorylated form existing as a monomer or dimer, and the Tyr-27-form as a monomer only. Interacts (tyrosine phosphorylated form) with the SH2 domain-containing proteins, RASA1, NCK1 and SRC. Interacts (tyrosine phosphorylated form) with INSR, the interaction (Tyr-27-phosphorylated form) is increased on insulin stimulation. Interacts (Tyr-19 phosphorylated form) with MAPK1 (phosphorylated form); the interaction, promoted by insulin, leads to nuclear location and MAPK1 activation. Interacts with STAT3; the interaction is increased on insulin-induced tyrosine phosphorylation leading to STAT activation. Phosphorylated on serine and tyrosine residues. CAV1 promotes phosphorylation on Ser-23 which then targets the complex to the plasma membrane, lipid rafts and caveolae. Phosphorylation on Ser-36 appears to modulate mitosis in endothelial cells. Phosphorylation on both Tyr-19 and Tyr-27 is required for insulin-induced 'Ser-727' phosphorylation of STAT3 and its activation. Phosphorylation on Tyr-19 is required for insulin-induced phosphorylation of MAPK1 and DNA binding of STAT3. Tyrosine phosphorylation is induced by both EGF and insulin (By. similarity).

Its subcellular location is the nucleus. It localises to the cytoplasm. The protein resides in the golgi apparatus membrane. It is found in the cell membrane. The protein localises to the membrane. Its subcellular location is the caveola. In terms of biological role, may act as a scaffolding protein within caveolar membranes. Interacts directly with G-protein alpha subunits and can functionally regulate their activity. Acts as an accessory protein in conjunction with CAV1 in targeting to lipid rafts and driving caveolae formation. The Ser-36 phosphorylated form has a role in modulating mitosis in endothelial cells. Positive regulator of cellular mitogenesis of the MAPK signaling pathway. Required for the insulin-stimulated nuclear translocation and activation of MAPK1 and STAT3, and the subsequent regulation of cell cycle progression. The sequence is that of Caveolin-2 (CAV2) from Aotus nancymaae (Ma's night monkey).